A 199-amino-acid polypeptide reads, in one-letter code: Transgelin-2 (199 aa).

At Ala2 the chain carries N-acetylalanine. A Phosphoserine modification is found at Ser11. Residues Lys17 and Lys20 each carry the N6-acetyllysine modification. The Calponin-homology (CH) domain occupies 24–136 (PDLEQILIQW…RTLMNLGGLA (113 aa)). Phosphoserine is present on Ser163. Lys171 participates in a covalent cross-link: Glycyl lysine isopeptide (Lys-Gly) (interchain with G-Cter in SUMO2). A Calponin-like repeat occupies 174–199 (IGLQMGTNRGASQAGMTGYGMPRQIL). The residue at position 180 (Thr180) is a Phosphothreonine. Arg182 and Arg196 each carry omega-N-methylarginine.

It belongs to the calponin family.

In Rattus norvegicus (Rat), this protein is Transgelin-2 (Tagln2).